The primary structure comprises 2946 residues: Neurobeachin (2946 aa).

The disordered stretch occupies residues 971 to 995; the sequence is ENIKKGKKGNVSTISGLSSQTTGAK. Over residues 980-993 the composition is skewed to polar residues; the sequence is NVSTISGLSSQTTG. Serine 1011 and serine 1014 each carry phosphoserine. One copy of the WD 1 repeat lies at 1326–1368; sequence TTMFRIPEFKWSPMHQRLLTDLLFALETDVHVWRSHSTKSVMD. Disordered stretches follow at residues 1490–1531, 1651–1675, 1711–1731, and 1841–1860; these read QRDR…LSPI, TIKE…HTDS, VKKS…PATS, and GAVD…VNGA. The span at 1497 to 1517 shows a compositional bias: polar residues; it reads SSHGSSKPQEVPQSVTATAAS. Phosphoserine is present on serine 1529. Serine 1714 and serine 1717 each carry phosphoserine. Residues 1716-1731 show a composition bias toward polar residues; sequence ESLTENPSETLKPATS. Low complexity predominate over residues 1845–1855; it reads SGSSSSSSSSS. Serine 2138 is modified (phosphoserine). The region spanning 2147 to 2255 is the BEACH-type PH domain; that stretch reads NLAGPVVLST…TVKKVVYSLP (109 aa). The BEACH domain occupies 2274-2563; it reads ATPRQLYKSS…QLLIEPHPPR (290 aa). The residue at position 2575 (serine 2575) is a Phosphoserine. 4 WD repeats span residues 2718 to 2761, 2778 to 2818, 2860 to 2899, and 2902 to 2941; these read GHWD…HIIG, GHDH…RALE, EIND…QLYI, and GCDA…WHYE.

Belongs to the WD repeat neurobeachin family. As to quaternary structure, interacts with RII subunit of PKA. In terms of tissue distribution, predominant in many brain structures. Also expressed at medium levels in spleen, thymus, prostate, testis and ovary. Low level expression is seen in heart, kidney, pancreas, skeletal muscle and intestine.

Its subcellular location is the cytoplasm. It localises to the membrane. Binds to type II regulatory subunits of protein kinase A and anchors/targets them to the membrane. May anchor the kinase to cytoskeletal and/or organelle-associated proteins. This chain is Neurobeachin, found in Homo sapiens (Human).